We begin with the raw amino-acid sequence, 739 residues long: Interleukin-17 receptor D (739 aa).

Residues 1–16 (MAPWLQLCSVFFTVNA) form the signal peptide. Over 17–299 (CLNGSQLAVA…VHSPWAGPIR (283 aa)) the chain is Extracellular. N-linked (GlcNAc...) asparagine glycans are attached at residues asparagine 19, asparagine 55, asparagine 62, asparagine 80, asparagine 137, asparagine 171, asparagine 206, and asparagine 277. A helical membrane pass occupies residues 300–320 (AVAITVPLVVISAFATLFTVM). Over 321 to 739 (CRKKQQENIY…TDELHAVAPL (419 aa)) the chain is Cytoplasmic. In terms of domain architecture, SEFIR spans 355-509 (RPKVFLCYSS…LMDNLPQLCS (155 aa)). Disordered regions lie at residues 614 to 635 (GPADSQHESQHGGLDQDGEARP) and 650 to 719 (VKAG…SSGS). Over residues 667–702 (SSVPSSELSLPLMEGLSTDQTETSSLTESVSSSSGL) the composition is skewed to low complexity.

In terms of assembly, interacts with MAP3K7. Self-associates. Interacts with FGFR1, FGFR2 and phosphorylated MAP2K1 or MAP2K2. Associates with a MAP2K1/2-MAPK1/3 complex. As to expression, expressed in umbilical vein endothelial cells and in several highly vascularized tissues such as kidney, colon, skeletal muscle, heart and small intestine. Highly expressed in ductal epithelial cells of salivary glands, seminal vesicles and the collecting tubules of the kidney. Isoform 1 is also highly expressed in both fetal and adult brain, pituitary, tonsils, spleen, adenoids, fetal kidney, liver, testes and ovary. Isoform 1 is also expressed at moderate levels in primary aortic endothelial cells and adrenal medulla, and at low levels in adrenal cortex. Isoform 4 is specifically and highly expressed in pituitary, fetal brain and umbilical vein endothelial cells.

Its subcellular location is the golgi apparatus membrane. It localises to the cell membrane. The protein localises to the cytoplasm. Its function is as follows. Feedback inhibitor of fibroblast growth factor mediated Ras-MAPK signaling and ERK activation. Regulates the nuclear ERK signaling pathway by spatially blocking nuclear translocation of activated ERK without inhibiting cytoplasmic phosphorylation of ERK. Mediates JNK activation and may be involved in apoptosis. May inhibit FGF-induced FGFR1 tyrosine phosphorylation. Might have a role in the early stages of fate specification of GnRH-secreting neurons. Inhibits TGFB-induced epithelial-to-mesenchymal transition in lens epithelial cells. In Homo sapiens (Human), this protein is Interleukin-17 receptor D (IL17RD).